The sequence spans 405 residues: CCA-adding enzyme (405 aa).

ATP-binding residues include G8 and R11. CTP is bound by residues G8 and R11. Residues E21 and D23 each coordinate Mg(2+). ATP-binding residues include R91, R137, and R140. R91, R137, and R140 together coordinate CTP. The HD domain occupies 220-326 (PLSHGLSTLS…LNFFDELDLW (107 aa)).

The protein belongs to the tRNA nucleotidyltransferase/poly(A) polymerase family. Bacterial CCA-adding enzyme type 2 subfamily. The cofactor is Mg(2+).

The catalysed reaction is a tRNA precursor + 2 CTP + ATP = a tRNA with a 3' CCA end + 3 diphosphate. The enzyme catalyses a tRNA with a 3' CCA end + 2 CTP + ATP = a tRNA with a 3' CCACCA end + 3 diphosphate. Functionally, catalyzes the addition and repair of the essential 3'-terminal CCA sequence in tRNAs without using a nucleic acid template. Adds these three nucleotides in the order of C, C, and A to the tRNA nucleotide-73, using CTP and ATP as substrates and producing inorganic pyrophosphate. tRNA 3'-terminal CCA addition is required both for tRNA processing and repair. Also involved in tRNA surveillance by mediating tandem CCA addition to generate a CCACCA at the 3' terminus of unstable tRNAs. While stable tRNAs receive only 3'-terminal CCA, unstable tRNAs are marked with CCACCA and rapidly degraded. The polypeptide is CCA-adding enzyme (Hamiltonella defensa subsp. Acyrthosiphon pisum (strain 5AT)).